The primary structure comprises 123 residues: Hydrogenase maturation factor HypA (123 aa).

Position 2 (H2) interacts with Ni(2+). Positions 77, 80, 96, and 99 each coordinate Zn(2+).

Belongs to the HypA/HybF family.

In terms of biological role, involved in the maturation of [NiFe] hydrogenases. Required for nickel insertion into the metal center of the hydrogenase. This chain is Hydrogenase maturation factor HypA, found in Methanococcus aeolicus (strain ATCC BAA-1280 / DSM 17508 / OCM 812 / Nankai-3).